A 507-amino-acid chain; its full sequence is ATP synthase subunit alpha, chloroplastic (507 aa).

170-177 (GDRQTGKT) lines the ATP pocket.

Belongs to the ATPase alpha/beta chains family. As to quaternary structure, F-type ATPases have 2 components, CF(1) - the catalytic core - and CF(0) - the membrane proton channel. CF(1) has five subunits: alpha(3), beta(3), gamma(1), delta(1), epsilon(1). CF(0) has four main subunits: a, b, b' and c.

The protein localises to the plastid. The protein resides in the chloroplast thylakoid membrane. It carries out the reaction ATP + H2O + 4 H(+)(in) = ADP + phosphate + 5 H(+)(out). Produces ATP from ADP in the presence of a proton gradient across the membrane. The alpha chain is a regulatory subunit. The polypeptide is ATP synthase subunit alpha, chloroplastic (Daucus carota (Wild carrot)).